The chain runs to 178 residues: tRNA (cytidine(56)-2'-O)-methyltransferase (178 aa).

S-adenosyl-L-methionine-binding positions include L84, 112–116 (GAEKV), and 130–137 (VGNQPHSE).

Belongs to the aTrm56 family. As to quaternary structure, homodimer.

Its subcellular location is the cytoplasm. The enzyme catalyses cytidine(56) in tRNA + S-adenosyl-L-methionine = 2'-O-methylcytidine(56) in tRNA + S-adenosyl-L-homocysteine + H(+). In terms of biological role, specifically catalyzes the AdoMet-dependent 2'-O-ribose methylation of cytidine at position 56 in tRNAs. In Methanocella arvoryzae (strain DSM 22066 / NBRC 105507 / MRE50), this protein is tRNA (cytidine(56)-2'-O)-methyltransferase.